A 199-amino-acid chain; its full sequence is Prolactin (199 aa).

Cys-4 and Cys-11 are disulfide-bonded. Ser-26, Ser-34, and Ser-90 each carry phosphoserine. Disulfide bonds link Cys-58–Cys-174 and Cys-191–Cys-199.

Belongs to the somatotropin/prolactin family. Interacts with PRLR.

The protein resides in the secreted. In terms of biological role, prolactin acts primarily on the mammary gland by promoting lactation. The protein is Prolactin (PRL) of Loxodonta africana (African elephant).